Reading from the N-terminus, the 230-residue chain is Cytidylate kinase (230 aa).

ATP is bound at residue 10–18 (GPAGSGKST).

This sequence belongs to the cytidylate kinase family. Type 1 subfamily.

It is found in the cytoplasm. It catalyses the reaction CMP + ATP = CDP + ADP. The catalysed reaction is dCMP + ATP = dCDP + ADP. The chain is Cytidylate kinase from Leptospira borgpetersenii serovar Hardjo-bovis (strain L550).